The following is a 393-amino-acid chain: NAD(P)H-quinone oxidoreductase subunit H, chloroplastic (393 aa).

This sequence belongs to the complex I 49 kDa subunit family. NDH is composed of at least 16 different subunits, 5 of which are encoded in the nucleus.

Its subcellular location is the plastid. The protein resides in the chloroplast thylakoid membrane. It carries out the reaction a plastoquinone + NADH + (n+1) H(+)(in) = a plastoquinol + NAD(+) + n H(+)(out). It catalyses the reaction a plastoquinone + NADPH + (n+1) H(+)(in) = a plastoquinol + NADP(+) + n H(+)(out). Functionally, NDH shuttles electrons from NAD(P)H:plastoquinone, via FMN and iron-sulfur (Fe-S) centers, to quinones in the photosynthetic chain and possibly in a chloroplast respiratory chain. The immediate electron acceptor for the enzyme in this species is believed to be plastoquinone. Couples the redox reaction to proton translocation, and thus conserves the redox energy in a proton gradient. The sequence is that of NAD(P)H-quinone oxidoreductase subunit H, chloroplastic from Lolium perenne (Perennial ryegrass).